Here is a 416-residue protein sequence, read N- to C-terminus: CinA-like protein (416 aa).

This sequence belongs to the CinA family.

In Thermosynechococcus vestitus (strain NIES-2133 / IAM M-273 / BP-1), this protein is CinA-like protein.